A 426-amino-acid polypeptide reads, in one-letter code: 3-phosphoshikimate 1-carboxyvinyltransferase (426 aa).

3-phosphoshikimate contacts are provided by K22, S23, and R27. K22 is a phosphoenolpyruvate binding site. Phosphoenolpyruvate is bound by residues G96 and R124. 3-phosphoshikimate-binding residues include S170, S171, Q172, S198, D314, N337, and K341. Q172 is a binding site for phosphoenolpyruvate. D314 functions as the Proton acceptor in the catalytic mechanism. Residues R345, R387, and K412 each coordinate phosphoenolpyruvate.

The protein belongs to the EPSP synthase family. In terms of assembly, monomer.

The protein localises to the cytoplasm. The enzyme catalyses 3-phosphoshikimate + phosphoenolpyruvate = 5-O-(1-carboxyvinyl)-3-phosphoshikimate + phosphate. Its pathway is metabolic intermediate biosynthesis; chorismate biosynthesis; chorismate from D-erythrose 4-phosphate and phosphoenolpyruvate: step 6/7. Its function is as follows. Catalyzes the transfer of the enolpyruvyl moiety of phosphoenolpyruvate (PEP) to the 5-hydroxyl of shikimate-3-phosphate (S3P) to produce enolpyruvyl shikimate-3-phosphate and inorganic phosphate. The chain is 3-phosphoshikimate 1-carboxyvinyltransferase from Shewanella sediminis (strain HAW-EB3).